The primary structure comprises 364 residues: Protein IncC (364 aa).

Basic and acidic residues-rich tracts occupy residues 1–10 (MGVIHEETAY), 26–42 (ADHRDSAGRLSRWEATG), and 89–100 (HRPEVGSGRQEK). Disordered stretches follow at residues 1 to 63 (MGVI…ASRV) and 75 to 102 (VRAGNGGSAGTSGVHRPEVGSGRQEKTG).

The protein belongs to the ParA family.

This is one of the proteins encoded by the trfB operon; it is involved in plasmid maintenance and replication. The protein is Protein IncC (incC) of Escherichia coli.